Reading from the N-terminus, the 312-residue chain is MSISNITVYMPSVLTLVGIPGLESVQCWIGIPFCAIYLIAMIGNSLLLSIIKSERSLHEPLYIFLGMLGATDIALASSIMPKMLGIFWFNVPEIYFDSCLLQMWFIHTLQGIESGILVAMALDRYVAICYPLRHANIFTHQLVIQIGTMVVLRAAILVAPCLVLIKCRFQFYHTTVISHSYCEHMAIVKLAAANVQVNKIYGLFVAFTVAGFDLTFITLSYIQIFITVFRLPQKEARFKAFNTCIAHICVFLQFYLLAFFSFFTHRFGSHISPYIHILFSSIYLLVPPFLNPLVYGAKTTQIRIHVVKMFCS.

At 1 to 27 the chain is on the extracellular side; that stretch reads MSISNITVYMPSVLTLVGIPGLESVQC. N-linked (GlcNAc...) asparagine glycosylation is present at N5. A helical membrane pass occupies residues 28 to 48; it reads WIGIPFCAIYLIAMIGNSLLL. Residues 49–56 lie on the Cytoplasmic side of the membrane; it reads SIIKSERS. A helical transmembrane segment spans residues 57–77; it reads LHEPLYIFLGMLGATDIALAS. Topologically, residues 78–101 are extracellular; it reads SIMPKMLGIFWFNVPEIYFDSCLL. C99 and C182 are oxidised to a cystine. The chain crosses the membrane as a helical span at residues 102 to 122; the sequence is QMWFIHTLQGIESGILVAMAL. Over 123-141 the chain is Cytoplasmic; that stretch reads DRYVAICYPLRHANIFTHQ. The helical transmembrane segment at 142-162 threads the bilayer; it reads LVIQIGTMVVLRAAILVAPCL. The Extracellular segment spans residues 163–199; it reads VLIKCRFQFYHTTVISHSYCEHMAIVKLAAANVQVNK. A helical transmembrane segment spans residues 200 to 220; it reads IYGLFVAFTVAGFDLTFITLS. Over 221 to 240 the chain is Cytoplasmic; sequence YIQIFITVFRLPQKEARFKA. Residues 241-261 traverse the membrane as a helical segment; that stretch reads FNTCIAHICVFLQFYLLAFFS. The Extracellular portion of the chain corresponds to 262–276; sequence FFTHRFGSHISPYIH. A helical membrane pass occupies residues 277 to 297; it reads ILFSSIYLLVPPFLNPLVYGA. Over 298-312 the chain is Cytoplasmic; it reads KTTQIRIHVVKMFCS.

The protein belongs to the G-protein coupled receptor 1 family.

Its subcellular location is the cell membrane. In terms of biological role, odorant receptor. The sequence is that of Olfactory receptor 52A1 (OR52A1) from Homo sapiens (Human).